A 150-amino-acid polypeptide reads, in one-letter code: MTNSFQNSRRDLRERAFQALFNIEMGAELLAASQFAYGYDKVTGEDAQVLELPIFLLSLVTGVNNHKEELDNLISTHLKKGWSLERLTLTDKTLLRLGLFEIKYFDETPDRVALNEIIEVAKKYSDETSAKFINGLLSQYVSEAPSANKS.

Belongs to the NusB family.

Its function is as follows. Involved in transcription antitermination. Required for transcription of ribosomal RNA (rRNA) genes. Binds specifically to the boxA antiterminator sequence of the ribosomal RNA (rrn) operons. In Streptococcus pyogenes serotype M3 (strain ATCC BAA-595 / MGAS315), this protein is Transcription antitermination protein NusB.